The following is a 152-amino-acid chain: Large ribosomal subunit protein uL13 (152 aa).

It belongs to the universal ribosomal protein uL13 family. As to quaternary structure, part of the 50S ribosomal subunit.

In terms of biological role, this protein is one of the early assembly proteins of the 50S ribosomal subunit, although it is not seen to bind rRNA by itself. It is important during the early stages of 50S assembly. This chain is Large ribosomal subunit protein uL13, found in Wolbachia pipientis subsp. Culex pipiens (strain wPip).